Consider the following 3021-residue polypeptide: Genome polyprotein (3021 aa).

Serine 2 carries the post-translational modification N-acetylserine; by host. Residues 2–23 (STLPKPQRKTKRNTIRRPQDVK) form an interaction with STAT1 region. An interaction with EIF2AK2/PKR region spans residues 2–58 (STLPKPQRKTKRNTIRRPQDVKFPGGGQIVGGVYVLPRRGPRLGVRATRKTSERSQP). The tract at residues 2–59 (STLPKPQRKTKRNTIRRPQDVKFPGGGQIVGGVYVLPRRGPRLGVRATRKTSERSQPR) is interaction with DDX3X. A disordered region spans residues 2–75 (STLPKPQRKT…PKARRSEGRS (74 aa)). The Cytoplasmic segment spans residues 2–168 (STLPKPQRKT…EDGINFATGN (167 aa)). 2 consecutive short sequence motifs (nuclear localization signal) follow at residues 5–13 (PKPQRKTKR) and 38–43 (PRRGPR). Basic residues predominate over residues 7–16 (PQRKTKRNTI). Serine 53 is subject to Phosphoserine; by host. Short sequence motifs (nuclear localization signal) lie at residues 58–64 (PRGRRQP) and 66–71 (PKARRS). The span at 58-68 (PRGRRQPIPKA) shows a compositional bias: basic residues. Serine 99 bears the Phosphoserine; by host mark. The important for endoplasmic reticulum and mitochondrial localization stretch occupies residues 112–152 (PRRRSRNLGKVIDTLTCGFADLMGYIPLVGAPVGGVARALA). Serine 116 bears the Phosphoserine; by host PKA mark. The segment at 122 to 173 (VIDTLTCGFADLMGYIPLVGAPVGGVARALAHGVRALEDGINFATGNLPGCS) is interaction with APOA2. The tract at residues 164-167 (FATG) is important for lipid droplets localization. The helical transmembrane segment at 169–189 (LPGCSFSIFLLALFSCLIHPA) threads the bilayer. The propeptide at 178–191 (LLALFSCLIHPAAS) is ER anchor for the core protein, removed in mature form by host signal peptidase. The Lumenal segment spans residues 190–358 (ASLEWRNTSG…AGAHWGILAG (169 aa)). N-linked (GlcNAc...) asparagine; by host glycans are attached at residues asparagine 196, asparagine 209, and asparagine 234. The tract at residues 265–296 (LVGAATMCSALYVGDMCGAVFLVGQAFTFRPR) is important for fusion. Asparagine 305 carries an N-linked (GlcNAc...) asparagine; by host glycan. Residues 359–379 (LAYYSMQGNWAKVAIIMVMFS) form a helical membrane-spanning segment. The Lumenal portion of the chain corresponds to 380-731 (GVDAHTYTTG…WEFVILVFLL (352 aa)). Residues 385–412 (TYTTGGTASRHTQAFAGLFDIGPQQKLQ) form an HVR1 region. Residues asparagine 417, asparagine 423, and asparagine 430 are each glycosylated (N-linked (GlcNAc...) (high mannose) asparagine; by host). Disulfide bonds link cysteine 429-cysteine 553, cysteine 452-cysteine 459, cysteine 487-cysteine 495, and cysteine 504-cysteine 509. A glycan (N-linked (GlcNAc...) asparagine; by host) is linked at asparagine 448. The segment at 474–479 (DANITG) is HVR2. Asparagine 476 carries an N-linked (GlcNAc...) asparagine; by host glycan. The segment at 481-494 (SDDRPYCWHYAPRP) is CD81-binding 1. A glycan (N-linked (GlcNAc...) asparagine; by host) is linked at asparagine 533. Positions 545-552 (PPSGRWFG) are CD81-binding 2. Asparagine 557 carries N-linked (GlcNAc...) asparagine; by host glycosylation. The cysteines at positions 565 and 570 are disulfide-linked. The N-linked (GlcNAc...) asparagine; by host glycan is linked to asparagine 578. 3 cysteine pairs are disulfide-bonded: cysteine 587/cysteine 591, cysteine 603/cysteine 626, and cysteine 613/cysteine 650. A glycan (N-linked (GlcNAc...) (high mannose) asparagine; by host) is linked at asparagine 651. The cysteines at positions 658 and 683 are disulfide-linked. Residues 666–677 (SEQHPLLHSTTE) are PKR/eIF2-alpha phosphorylation homology domain (PePHD). A helical membrane pass occupies residues 732 to 752 (LADARVCVALWLMLMISQTEA). Over 753-763 (ALENLVTLNAV) the chain is Lumenal. Residues 764–784 (AAAGTHGIGWYLVAFCAAWYV) form a helical membrane-spanning segment. The Cytoplasmic segment spans residues 785 to 787 (RGK). The helical transmembrane segment at 788-809 (LVPLVTYSLTGLWSLALLVLLL) threads the bilayer. Residues 810-819 (PQRAYAWSGE) lie on the Lumenal side of the membrane. The helical transmembrane segment at 820-840 (DSATLGAGVLVLFGFFTLSPW) threads the bilayer. Residues 841-844 (YKHW) lie on the Cytoplasmic side of the membrane. Residues 845-864 (IGRLMWWNQYTICRCESALH) form a helical membrane-spanning segment. Residues 865–887 (VWVPPLLARGSRDGVILLTSLLY) lie on the Lumenal side of the membrane. Residues 888 to 908 (PSLIFDITKLLMAVLGPLYLI) traverse the membrane as a helical segment. Residues 905-1032 (LYLIQATITT…DYREMGWRLL (128 aa)) enclose the Peptidase C18 domain. At 909–1663 (QATITTTPYF…CMSADLEVTT (755 aa)) the chain is on the cytoplasmic side. The tract at residues 910 to 1212 (ATITTTPYFV…PVETLSTQAR (303 aa)) is protease NS2-3. A lipid anchor (S-palmitoyl cysteine; by host) is attached at cysteine 928. Positions 935–955 (IGGKYFQMIILSIGRWFNTYL) are interaction with host SCPS1. Active-site for protease NS2 activity; shared with dimeric partner residues include histidine 958, glutamate 978, and cysteine 999. The Peptidase S29 domain maps to 1033-1214 (APITAYAQQT…ETLSTQARSP (182 aa)). Catalysis depends on charge relay system; for serine protease NS3 activity residues histidine 1089 and aspartate 1113. Zn(2+) contacts are provided by cysteine 1129 and cysteine 1131. The active-site Charge relay system; for serine protease NS3 activity is serine 1171. 2 residues coordinate Zn(2+): cysteine 1177 and histidine 1181. Residues 1223-1375 (PAVPQSYQVG…SNIEEVALGS (153 aa)) enclose the Helicase ATP-binding domain. 1236–1243 (APTGSGKS) lines the ATP pocket. Residues serine 1243 and glutamate 1323 each contribute to the Mg(2+) site. A DECH box motif is present at residues 1322–1325 (DECH). The 163-residue stretch at 1382 to 1544 (YGKAIPIALL…DLQPAETTVR (163 aa)) folds into the Helicase C-terminal domain. The RNA-binding stretch occupies residues 1492–1504 (QRRGRTGRGRLGT). A helical transmembrane segment spans residues 1664–1684 (STWVLLGGVLAALAAYCLSVG). An NS3-binding region spans residues 1685-1696 (CVVIVGHIELEG). The Cytoplasmic segment spans residues 1685 to 1811 (CVVIVGHIEL…SVTSPLTTNQ (127 aa)). A helical transmembrane segment spans residues 1812 to 1830 (TMFFNILGGWVATHLAGPQ). The Lumenal segment spans residues 1831-1834 (SSSA). Residues 1835 to 1855 (FVVSGLAGAAIGGIGLGRVLL) traverse the membrane as a helical segment. Aspartate 1856 is a topological domain (cytoplasmic). A helical membrane pass occupies residues 1857–1877 (ILAGYGAGVSGALVAFKIMGG). The Lumenal segment spans residues 1878-1887 (ECPTAEDMVN). Residues 1888–1908 (LLPAILSPGALVVGVICAAIL) form a helical membrane-spanning segment. The Cytoplasmic segment spans residues 1909–1978 (RRHVGPGEGA…WINEDYPSPC (70 aa)). Cysteine 1978 carries the S-palmitoyl cysteine; by host lipid modification. An intramembrane segment occupies 1979–2008 (SDDWLRTIWDWVCSVLADFKAWLSAKIMPA). Residues 2009-3000 (LPGLPFISCQ…YHSVSRARTR (992 aa)) are Cytoplasmic-facing. Positions 2017, 2035, 2037, and 2058 each coordinate Zn(2+). An FKBP8-binding region spans residues 2126-2214 (EFFTEVDGVR…ASSSASQLSA (89 aa)). Residues 2126–2338 (EFFTEVDGVR…PVPPPRRKRT (213 aa)) form a transcriptional activation region. The segment at 2141-2145 (PPCKP) is interaction with non-structural protein 4A. Positions 2193–2215 (ARRLARGSPPSEASSSASQLSAP) are disordered. The tract at residues 2195 to 2448 (RLARGSPPSE…ALITPCSAEE (254 aa)) is interaction with host SKP2. Serine 2200, serine 2203, serine 2207, serine 2210, serine 2213, and serine 2216 each carry phosphoserine; by host. The span at 2200 to 2215 (SPPSEASSSASQLSAP) shows a compositional bias: low complexity. An ISDR region spans residues 2216–2255 (SLKATCQTHRPHPDAELVDANLLWRQEMGSNITRVESETK). The interval 2216–2281 (SLKATCQTHR…VEPSVAAECF (66 aa)) is interaction with EIF2AK2/PKR. An NS4B-binding region spans residues 2255–2312 (KVVVLDSFEPLRAETDDVEPSVAAECFKKPPKYPPALPIWARPDYNPPLLDRWKAPDY). Residues 2305 to 2387 (DRWKAPDYVP…STTSKVPPSP (83 aa)) are V3. Positions 2328–2331 (PPVP) match the SH3-binding motif. The Nuclear localization signal signature appears at 2333 to 2341 (PRRKRTIQL). Lysine 2356 is covalently cross-linked (Glycyl lysine isopeptide (Lys-Gly) (interchain with G-Cter in ubiquitin)). Positions 2356–2417 (KSFPSSKPQE…DPDLSCDSWS (62 aa)) are disordered. 2 stretches are compositionally biased toward low complexity: residues 2359 to 2381 (PSSKPQEENSSSSGVDTQSSTTS) and 2388 to 2401 (GGESDSESCSSMPP). A phosphoserine; by host mark is found at serine 2459 and serine 2472. The region spanning 2644–2762 (PLGFSYDTRC…VAESDGVDED (119 aa)) is the RdRp catalytic domain. Residues aspartate 2650, aspartate 2748, and aspartate 2749 each coordinate Mg(2+). A helical membrane pass occupies residues 3001–3021 (HLLLCLLLLTVGVGIFLLPAR).

The protein belongs to the hepacivirus polyprotein family. Homooligomer. Interacts with E1 (via C-terminus). Interacts with the non-structural protein 5A. Interacts (via N-terminus) with host STAT1 (via SH2 domain); this interaction results in decreased STAT1 phosphorylation and ubiquitin-mediated proteasome-dependent STAT1 degradation, leading to decreased IFN-stimulated gene transcription. Interacts with host STAT3; this interaction constitutively activates STAT3. Interacts with host LTBR receptor. Interacts with host TNFRSF1A receptor and possibly induces apoptosis. Interacts with host HNRPK. Interacts with host YWHAE. Interacts with host UBE3A/E6AP. Interacts with host DDX3X. Interacts with host APOA2. Interacts with host RXRA protein. Interacts with host SP110 isoform 3/Sp110b; this interaction sequesters the transcriptional corepressor SP110 away from the nucleus. Interacts with host CREB3 nuclear transcription protein; this interaction triggers cell transformation. Interacts with host ACY3. Interacts with host C1QR1. Interacts with host RBM24; this interaction, which enhances the interaction of the mature core protein with 5'-UTR, may inhibit viral translation and favor replication. Interacts with host EIF2AK2/PKR; this interaction induces the autophosphorylation of EIF2AK2. Part of the viral assembly initiation complex composed of NS2, E1, E2, NS3, NS4A, NS5A and the mature core protein. As to quaternary structure, forms a heterodimer with envelope glycoprotein E2. Interacts with mature core protein. Interacts with protease NS2. The heterodimer E1/E2 interacts with host CLDN1; this interaction plays a role in viral entry into host cell. Interacts with host SPSB2 (via C-terminus). Part of the viral assembly initiation complex composed of NS2, E1, E2, NS3, NS4A, NS5A and the mature core protein. Interacts with host NEURL3; this interaction prevents E1 binding to glycoprotein E2. In terms of assembly, forms a heterodimer with envelope glycoprotein E1. Interacts with host CD81 and SCARB1 receptors; these interactions play a role in viral entry into host cell. Interacts with host EIF2AK2/PKR; this interaction inhibits EIF2AK2 and probably allows the virus to evade the innate immune response. Interacts with host CD209/DC-SIGN and CLEC4M/DC-SIGNR. Interact with host SPCS1; this interaction is essential for viral particle assembly. Interacts with protease NS2. The heterodimer E1/E2 interacts with host CLDN1; this interaction plays a role in viral entry into host cell. Part of the viral assembly initiation complex composed of NS2, E1, E2, NS3, NS4A, NS5A and the mature core protein. Interacts with host SLC3A2/4F2hc; the interaction may facilitate viral entry into host cell. Interacts with human PLSCR1. Homohexamer. Homoheptamer. Interacts with protease NS2. As to quaternary structure, homodimer. Interacts with host SPCS1; this interaction is essential for viral particle assembly. Interacts with envelope glycoprotein E1. Interacts with envelope glycoprotein E2. Interacts with viroporin p7. Interacts with serine protease/helicase NS3. Part of the replication complex composed of NS2, NS3, NS4A, NS4B, NS5A and the RNA-directed RNA polymerase embedded in an ER-derived membranous web. Part of the viral assembly initiation complex composed of NS2, E1, E2, NS3, NS4A, NS5A and the mature core protein. In terms of assembly, interacts with protease NS2. Interacts with non-structural protein 4A; this interaction stabilizes the folding of NS3 serine protease. NS3-NS4A interaction is essential for NS3 activation and allows membrane anchorage of the latter. NS3/NS4A complex also prevents phosphorylation of host IRF3, thus preventing the establishment of dsRNA induced antiviral state. Interacts with host MAVS; this interaction leads to the cleavage and inhibition of host MAVS. Interacts with host TICAM1; this interaction leads to the cleavage and inhibition of host TICAM1. Interacts with host TANK-binding kinase/TBK1; this interaction results in the inhibition of the association between TBK1 and IRF3, which leads to the inhibition of IRF3 activation. Interacts with host RBM24. Part of the replication complex composed of NS2, NS3, NS4A, NS4B, NS5A and the RNA-directed RNA polymerase embedded in an ER-derived membranous web. Part of the viral assembly initiation complex composed of NS2, E1, E2, NS3, NS4A, NS5A and the mature core protein. Interacts with NS3 serine protease; this interaction stabilizes the folding of NS3 serine protease. NS3-NS4A interaction is essential for NS3 activation and allows membrane anchorage of the latter. Interacts with non-structural protein 5A (via N-terminus). Part of the replication complex composed of NS2, NS3, NS4A, NS4B, NS5A and the RNA-directed RNA polymerase embedded in an ER-derived membranous web. Part of the viral assembly initiation complex composed of NS2, E1, E2, NS3, NS4A, NS5A and the mature core protein. As to quaternary structure, homomultimer. Interacts with non-structural protein NS5A. Interacts with host PLA2G4C; this interaction likely initiates the recruitment of replication complexes to lipid droplets. Interacts with host STING; this interaction disrupts the interaction between STING and TBK1 thereby suppressing the interferon signaling. Part of the replication complex composed of NS2, NS3, NS4A, NS4B, NS5A and the RNA-directed RNA polymerase embedded in an ER-derived membranous web. In terms of assembly, monomer. Homodimer; dimerization is required for RNA-binding. Interacts with the mature core protein. Interacts (via N-terminus) with non-structural protein 4A. Interacts with non-structural protein 4B. Interacts (via region D2) with RNA-directed RNA polymerase. Part of the viral assembly initiation complex composed of NS2, E1, E2, NS3, NS4A, NS5A and the mature core protein. Part of the replication complex composed of NS2, NS3, NS4A, NS4B, NS5A and the RNA-directed RNA polymerase embedded in an ER-derived membranous web. Interacts with host GRB2. Interacts with host BIN1. Interacts with host PIK3R1. Interacts with host SRCAP. Interacts with host FKBP8. Interacts (via C-terminus) with host VAPB (via MSP domain). Interacts with host EIF2AK2/PKR; this interaction leads to disruption of EIF2AK2 dimerization by NS5A and probably allows the virus to evade the innate immune response. Interacts (via N-terminus) with host PACSIN2 (via N-terminus); this interaction attenuates protein kinase C alpha-mediated phosphorylation of PACSIN2 by disrupting the interaction between PACSIN2 and PRKCA. Interacts (via N-terminus) with host SRC kinase (via SH2 domain). Interacts with most Src-family kinases. Interacts with host IFI27 and SKP2; promotes the ubiquitin-mediated proteasomal degradation of NS5A. Interacts with host GPS2. Interacts with host TNFRSF21; this interaction allows the modulation by the virus of JNK, p38 MAPK, STAT3, and Akt signaling pathways in a DR6-dependent manner. Interacts (via N-terminus) with host CIDEB (via N-terminus); this interaction seems to regulate the association of HCV particles with APOE. Interacts with host CHKA/Choline Kinase-alpha; CHKA bridges host PI4KA and NS5A and potentiates NS5A-stimulated PI4KA activity, which then facilitates the targeting of the ternary complex to the ER for viral replication. Interacts with host SPSB2 (via C-terminus); this interaction targets NS5A for ubiquitination and degradation. Interacts with host RAB18; this interaction may promote the association of NS5A and other replicase components with lipid droplets. Interacts (via region D2) with host PPIA/CYPA; the interaction stimulates RNA-binding ability of NS5A and is dependent on the peptidyl-prolyl cis-trans isomerase activity of PPIA/CYPA. Interacts with host TRIM14; this interaction induces the degradation of NS5A. Homooligomer. Interacts with non-structural protein 5A. Interacts with host VAPB. Interacts with host PRK2/PKN2. Interacts with host HNRNPA1 and SEPT6; these interactions facilitate viral replication. Part of the replication complex composed of NS2, NS3, NS4A, NS4B, NS5A and the RNA-directed RNA polymerase. Zn(2+) serves as cofactor. Mg(2+) is required as a cofactor. In terms of processing, specific enzymatic cleavages in vivo yield mature proteins. The structural proteins, core, E1, E2 and p7 are produced by proteolytic processing by host signal peptidases. The core protein precursor is synthesized as a 23 kDa, which is retained in the ER membrane through the hydrophobic signal peptide. Cleavage by the signal peptidase releases the 21 kDa mature core protein. The cleavage of the core protein precursor occurs between aminoacids 176 and 188 but the exact cleavage site is not known. Some degraded forms of the core protein appear as well during the course of infection. The other proteins (p7, NS2, NS3, NS4A, NS4B, NS5A and NS5B) are cleaved by the viral proteases. Autoprocessing between NS2 and NS3 is mediated by the NS2 cysteine protease catalytic domain and regulated by the NS3 N-terminal domain. Phosphorylated by host PKC and PKA. Post-translationally, ubiquitinated; mediated by UBE3A and leading to core protein subsequent proteasomal degradation. In terms of processing, highly N-glycosylated. Palmitoylation is required for NS2/3 autoprocessing and E2 recruitment to membranes. Post-translationally, palmitoylated. This modification may play a role in its polymerization or in protein-protein interactions. In terms of processing, phosphorylated on serines in a basal form termed p56. p58 is a hyperphosphorylated form of p56. p56 and p58 coexist in the cell in roughly equivalent amounts. Hyperphosphorylation is dependent on the presence of NS4A. Host CSNK1A1/CKI-alpha or RPS6KB1 kinases may be responsible for NS5A phosphorylation. Tyrosine phosphorylation is essential for the interaction with host SRC. Post-translationally, ubiquitinated. Ubiquitination, most probably at Lys-2350, mediated by host IFI27 and SKP2 leads to proteasomal degradation, restricting viral infection. Ubiquitination by host TRIM22 leads to interruption of viral replication. In terms of processing, the N-terminus is phosphorylated by host PRK2/PKN2.

The protein localises to the host endoplasmic reticulum membrane. It is found in the host mitochondrion membrane. It localises to the virion. The protein resides in the host cytoplasm. Its subcellular location is the host nucleus. The protein localises to the host lipid droplet. It is found in the virion membrane. It localises to the host mitochondrion. The protein resides in the host cell membrane. Its subcellular location is the host perinuclear region. It carries out the reaction Hydrolysis of four peptide bonds in the viral precursor polyprotein, commonly with Asp or Glu in the P6 position, Cys or Thr in P1 and Ser or Ala in P1'.. It catalyses the reaction a ribonucleoside 5'-triphosphate + H2O = a ribonucleoside 5'-diphosphate + phosphate + H(+). The enzyme catalyses ATP + H2O = ADP + phosphate + H(+). The catalysed reaction is RNA(n) + a ribonucleoside 5'-triphosphate = RNA(n+1) + diphosphate. Its activity is regulated as follows. Inhibited by the antiviral drug hexamethylene amiloride. Inhibition by amantadine appears to be genotype-dependent. Also inhibited by long-alkyl-chain iminosugar derivatives. With respect to regulation, activity is up-regulated by PRK2/PKN2-mediated phosphorylation. Its function is as follows. Packages viral RNA to form a viral nucleocapsid, and promotes virion budding. Participates in the viral particle production as a result of its interaction with the non-structural protein 5A. Binds RNA and may function as a RNA chaperone to induce the RNA structural rearrangements taking place during virus replication. Modulates viral translation initiation by interacting with viral IRES and 40S ribosomal subunit. Affects various cell signaling pathways, host immunity and lipid metabolism. Prevents the establishment of cellular antiviral state by blocking the interferon-alpha/beta (IFN-alpha/beta) and IFN-gamma signaling pathways and by blocking the formation of phosphorylated STAT1 and promoting ubiquitin-mediated proteasome-dependent degradation of STAT1. Activates STAT3 leading to cellular transformation. Regulates the activity of cellular genes, including c-myc and c-fos. May repress the promoter of p53, and sequester CREB3 and SP110 isoform 3/Sp110b in the cytoplasm. Represses cell cycle negative regulating factor CDKN1A, thereby interrupting an important check point of normal cell cycle regulation. Targets transcription factors involved in the regulation of inflammatory responses and in the immune response: suppresses TNF-induced NF-kappa-B activation, and activates AP-1. Binds to dendritic cells (DCs) via C1QR1, resulting in down-regulation of T-lymphocytes proliferation. Alters lipid metabolism by interacting with hepatocellular proteins involved in lipid accumulation and storage. Induces up-regulation of FAS promoter activity, and thereby contributes to the increased triglyceride accumulation in hepatocytes (steatosis). In terms of biological role, forms a heterodimer with envelope glycoprotein E2, which mediates virus attachment to the host cell, virion internalization through clathrin-dependent endocytosis and fusion with host membrane. Fusion with the host cell is most likely mediated by both E1 and E2, through conformational rearrangements of the heterodimer required for fusion rather than a classical class II fusion mechanism. E1/E2 heterodimer binds host apolipoproteins such as APOB and ApoE thereby forming a lipo-viro-particle (LVP). APOE associated to the LVP allows the initial virus attachment to cell surface receptors such as the heparan sulfate proteoglycans (HSPGs), syndecan-1 (SDC1), syndecan-1 (SDC2), the low-density lipoprotein receptor (LDLR) and scavenger receptor class B type I (SCARB1). The cholesterol transfer activity of SCARB1 allows E2 exposure and binding of E2 to SCARB1 and the tetraspanin CD81. E1/E2 heterodimer binding on CD81 activates the epithelial growth factor receptor (EGFR) signaling pathway. Diffusion of the complex E1-E2-EGFR-SCARB1-CD81 to the cell lateral membrane allows further interaction with Claudin 1 (CLDN1) and occludin (OCLN) to finally trigger HCV entry. Functionally, forms a heterodimer with envelope glycoprotein E1, which mediates virus attachment to the host cell, virion internalization through clathrin-dependent endocytosis and fusion with host membrane. Fusion with the host cell is most likely mediated by both E1 and E2, through conformational rearrangements of the heterodimer required for fusion rather than a classical class II fusion mechanism. The interaction between envelope glycoprotein E2 and host apolipoprotein E/APOE allows the proper assembly, maturation and infectivity of the viral particles. This interaction is probably promoted via the up-regulation of cellular autophagy by the virus. E1/E2 heterodimer binds host apolipoproteins such as APOB and APOE thereby forming a lipo-viro-particle (LVP). APOE associated to the LVP allows the initial virus attachment to cell surface receptors such as the heparan sulfate proteoglycans (HSPGs), syndecan-1 (SDC1), syndecan-1 (SDC2), the low-density lipoprotein receptor (LDLR) and scavenger receptor class B type I (SCARB1). The cholesterol transfer activity of SCARB1 allows E2 exposure and binding of E2 to SCARB1 and the tetraspanin CD81. E1/E2 heterodimer binding on CD81 activates the epithelial growth factor receptor (EGFR) signaling pathway. Diffusion of the complex E1-E2-EGFR-SCARB1-CD81 to the cell lateral membrane allows further interaction with Claudin 1 (CLDN1) and occludin (OCLN) to finally trigger HCV entry. Inhibits host EIF2AK2/PKR activation, preventing the establishment of an antiviral state. Viral ligand for CD209/DC-SIGN and CLEC4M/DC-SIGNR, which are respectively found on dendritic cells (DCs), and on liver sinusoidal endothelial cells and macrophage-like cells of lymph node sinuses. These interactions allow the capture of circulating HCV particles by these cells and subsequent facilitated transmission to permissive cells such as hepatocytes and lymphocyte subpopulations. The interaction between E2 and host amino acid transporter complex formed by SLC3A2 and SLC7A5/LAT1 may facilitate viral entry into host cell. Ion channel protein that acts as a viroporin and plays an essential role in the assembly, envelopment and secretion of viral particles. Regulates the host cell secretory pathway, which induces the intracellular retention of viral glycoproteins and favors assembly of viral particles. Creates a pore in acidic organelles and releases Ca(2+) and H(+) in the cytoplasm of infected cells, leading to a productive viral infection. High levels of cytoplasmic Ca(2+) may trigger membrane trafficking and transport of viral ER-associated proteins to viroplasms, sites of viral genome replication. This ionic imbalance induces the assembly of the inflammasome complex, which triggers the maturation of pro-IL-1beta into IL-1beta through the action of caspase-1. Targets also host mitochondria and induces mitochondrial depolarization. In addition of its role as a viroporin, acts as a lipid raft adhesion factor. Its function is as follows. Cysteine protease required for the proteolytic auto-cleavage between the non-structural proteins NS2 and NS3. The N-terminus of NS3 is required for the function of NS2 protease (active region NS2-3). Promotes the initiation of viral particle assembly by mediating the interaction between structural and non-structural proteins. In terms of biological role, displays three enzymatic activities: serine protease with a chymotrypsin-like fold, NTPase and RNA helicase. NS3 serine protease, in association with NS4A, is responsible for the cleavages of NS3-NS4A, NS4A-NS4B, NS4B-NS5A and NS5A-NS5B. The NS3/NS4A complex prevents phosphorylation of host IRF3, thus preventing the establishment of dsRNA induced antiviral state. The NS3/NS4A complex induces host amino acid transporter component SLC3A2, thus contributing to HCV propagation. NS3 RNA helicase binds to RNA and unwinds both dsDNA and dsRNA in the 3' to 5' direction, and likely resolves RNA complicated stable secondary structures in the template strand. Binds a single ATP and catalyzes the unzipping of a single base pair of dsRNA. Inhibits host antiviral proteins TBK1 and IRF3 thereby preventing the establishment of an antiviral state. Cleaves host MAVS/CARDIF thereby preventing the establishment of an antiviral state. Cleaves host TICAM1/TRIF, thereby disrupting TLR3 signaling and preventing the establishment of an antiviral state. Functionally, peptide cofactor which forms a non-covalent complex with the N-terminal of NS3 serine protease. The NS3/NS4A complex prevents phosphorylation of host IRF3, thus preventing the establishment of dsRNA induced antiviral state. The NS3/NS4A complex induces host amino acid transporter component SLC3A2, thus contributing to HCV propagation. Induces a specific membrane alteration that serves as a scaffold for the virus replication complex. This membrane alteration gives rise to the so-called ER-derived membranous web that contains the replication complex. NS4B self-interaction contributes to its function in membranous web formation. Promotes host TRIF protein degradation in a CASP8-dependent manner thereby inhibiting host TLR3-mediated interferon signaling. Disrupts the interaction between STING and TBK1 contributing to the inhibition of interferon signaling. Its function is as follows. Phosphorylated protein that is indispensable for viral replication and assembly. Both hypo- and hyperphosphorylated states are required for the viral life cycle. The hyperphosphorylated form of NS5A is an inhibitor of viral replication. Involved in RNA-binding and especially in binding to the viral genome. Zinc is essential for RNA-binding. Participates in the viral particle production as a result of its interaction with the mature viral core protein. Its interaction with host VAPB may target the viral replication complex to vesicles. Down-regulates viral IRES translation initiation. Mediates interferon resistance, presumably by interacting with and inhibiting host EIF2AK2/PKR. Prevents BIN1-induced apoptosis. Acts as a transcriptional activator of some host genes important for viral replication when localized in the nucleus. Via the interaction with host PACSIN2, modulates lipid droplet formation in order to promote virion assembly. Modulates TNFRSF21/DR6 signaling pathway for viral propagation. In terms of biological role, RNA-dependent RNA polymerase that performs primer-template recognition and RNA synthesis during viral replication. Initiates RNA transcription/replication at a flavin adenine dinucleotide (FAD), resulting in a 5'- FAD cap on viral RNAs. In this way, recognition of viral 5' RNA by host pattern recognition receptors can be bypassed, thereby evading activation of antiviral pathways. This chain is Genome polyprotein, found in Homo sapiens (Human).